We begin with the raw amino-acid sequence, 506 residues long: MSPAGCSHVNGFKVDNWKQNLRVIYQCFVWSGSAETRKRKAKSCICHMCGAHLNRLHSCLHCVFFGCFSKKHIHEHAKNKRHNLAIDLLYGGIYCFVCQDYIYDKDMEQIAKEEQRKAWKLQGIGEKYSMWEPTKRELELLRHNPKRRKITANCTIGLRGLINLGNTCFMNCIVQALTHTPLLRDFFLSDRHKCEMQSNSCLVCEMSQLFQEFYSGHRSPHIPFRLLHLVWTHARHLAGYEQQDAHEFLIAALDVLHRHCKDDNGKKANNPNHCNCIIDQIFTGGLQSDVTCQVCHGVSTTIDPFWDISLDLPGSSTPFWPLSPGSDGSVVNGDSHPSGATTLTDCLRRFTRPEHLGSSAKIKCSGCHSYQESTKQLTMKRLPIVACFHLKRFEHSAKLRRKITTYVSFPLELDMTPFMASSKESRMNGQYQQPVDSLNNDNKYSLFAVVNHQGTLESGHYTTFIRQHKDQWFKCDDAIITKASIKDVLDSEGYLLFYHKQFLEYE.

A UBP-type zinc finger spans residues 4–121 (AGCSHVNGFK…KEEQRKAWKL (118 aa)). Residues cysteine 6, histidine 8, cysteine 46, cysteine 49, cysteine 59, cysteine 62, cysteine 67, histidine 72, histidine 76, histidine 82, cysteine 95, and cysteine 98 each contribute to the Zn(2+) site. The USP domain occupies 159-501 (RGLINLGNTC…EGYLLFYHKQ (343 aa)). Residue cysteine 168 is the Nucleophile of the active site. Residue histidine 460 is the Proton acceptor of the active site.

This sequence belongs to the peptidase C19 family. UBP8 subfamily. In terms of assembly, component of some SAGA transcription coactivator-HAT complexes.

It is found in the nucleus. The catalysed reaction is Thiol-dependent hydrolysis of ester, thioester, amide, peptide and isopeptide bonds formed by the C-terminal Gly of ubiquitin (a 76-residue protein attached to proteins as an intracellular targeting signal).. Its function is as follows. Histone deubiquitinating component of the transcription regulatory histone acetylation (HAT) complex SAGA. Catalyzes the deubiquitination of both histones H2A and H2B, thereby acting as a coactivator. Recruited to specific gene promoters by activators, where it is required for transcription. This is Ubiquitin carboxyl-terminal hydrolase 22 (usp22) from Danio rerio (Zebrafish).